The following is a 353-amino-acid chain: Photosystem II D2 protein (353 aa).

N-acetylthreonine is present on Thr-2. Position 2 is a phosphothreonine (Thr-2). Residues 41–61 (CAYFALGGWFTGTTFVTSWYT) traverse the membrane as a helical segment. His-118 is a binding site for chlorophyll a. Residues 125-141 (GFMLRQFELARSVQLRP) form a helical membrane-spanning segment. Positions 130 and 143 each coordinate pheophytin a. Residues 153 to 166 (VFVSVFLIYPLGQS) traverse the membrane as a helical segment. His-198 lines the chlorophyll a pocket. Residues 208 to 228 (AALLCAIHGATVENTLFEDGD) form a helical membrane-spanning segment. His-215 and Phe-262 together coordinate a plastoquinone. His-215 contacts Fe cation. Fe cation is bound at residue His-269. Residues 279 to 295 (GLWMSAIGVVGLALNLR) traverse the membrane as a helical segment.

Belongs to the reaction center PufL/M/PsbA/D family. In terms of assembly, PSII is composed of 1 copy each of membrane proteins PsbA, PsbB, PsbC, PsbD, PsbE, PsbF, PsbH, PsbI, PsbJ, PsbK, PsbL, PsbM, PsbT, PsbX, PsbY, PsbZ, Psb30/Ycf12, at least 3 peripheral proteins of the oxygen-evolving complex and a large number of cofactors. It forms dimeric complexes. The cofactor is The D1/D2 heterodimer binds P680, chlorophylls that are the primary electron donor of PSII, and subsequent electron acceptors. It shares a non-heme iron and each subunit binds pheophytin, quinone, additional chlorophylls, carotenoids and lipids. There is also a Cl(-1) ion associated with D1 and D2, which is required for oxygen evolution. The PSII complex binds additional chlorophylls, carotenoids and specific lipids..

Its subcellular location is the plastid. The protein localises to the chloroplast thylakoid membrane. The catalysed reaction is 2 a plastoquinone + 4 hnu + 2 H2O = 2 a plastoquinol + O2. Its function is as follows. Photosystem II (PSII) is a light-driven water:plastoquinone oxidoreductase that uses light energy to abstract electrons from H(2)O, generating O(2) and a proton gradient subsequently used for ATP formation. It consists of a core antenna complex that captures photons, and an electron transfer chain that converts photonic excitation into a charge separation. The D1/D2 (PsbA/PsbD) reaction center heterodimer binds P680, the primary electron donor of PSII as well as several subsequent electron acceptors. D2 is needed for assembly of a stable PSII complex. This chain is Photosystem II D2 protein, found in Agrostis stolonifera (Creeping bentgrass).